Here is a 272-residue protein sequence, read N- to C-terminus: Putative phosphoenolpyruvate synthase regulatory protein (272 aa).

152–159 (GVSRCGKT) contacts ADP.

This sequence belongs to the pyruvate, phosphate/water dikinase regulatory protein family. PSRP subfamily.

It carries out the reaction [pyruvate, water dikinase] + ADP = [pyruvate, water dikinase]-phosphate + AMP + H(+). It catalyses the reaction [pyruvate, water dikinase]-phosphate + phosphate + H(+) = [pyruvate, water dikinase] + diphosphate. Bifunctional serine/threonine kinase and phosphorylase involved in the regulation of the phosphoenolpyruvate synthase (PEPS) by catalyzing its phosphorylation/dephosphorylation. The protein is Putative phosphoenolpyruvate synthase regulatory protein of Pseudomonas fluorescens (strain SBW25).